A 673-amino-acid polypeptide reads, in one-letter code: Exoribonuclease 2 (673 aa).

Residues 191–516 (RTDLTATPFF…NHRLLKAVIA (326 aa)) enclose the RNB domain. The S1 motif domain occupies 562 to 645 (DKVFNAEIID…ETRSLIAKPA (84 aa)). The tract at residues 650–673 (PGPAPVAPTSEADATPADEAPKAE) is disordered.

This sequence belongs to the RNR ribonuclease family. RNase II subfamily.

It is found in the cytoplasm. The enzyme catalyses Exonucleolytic cleavage in the 3'- to 5'-direction to yield nucleoside 5'-phosphates.. Its function is as follows. Involved in mRNA degradation. Hydrolyzes single-stranded polyribonucleotides processively in the 3' to 5' direction. This is Exoribonuclease 2 from Aeromonas hydrophila subsp. hydrophila (strain ATCC 7966 / DSM 30187 / BCRC 13018 / CCUG 14551 / JCM 1027 / KCTC 2358 / NCIMB 9240 / NCTC 8049).